The sequence spans 477 residues: UDP-N-acetylmuramate--L-alanine ligase (477 aa).

An ATP-binding site is contributed by 117-123; the sequence is GTHGKTT.

It belongs to the MurCDEF family.

The protein resides in the cytoplasm. The catalysed reaction is UDP-N-acetyl-alpha-D-muramate + L-alanine + ATP = UDP-N-acetyl-alpha-D-muramoyl-L-alanine + ADP + phosphate + H(+). The protein operates within cell wall biogenesis; peptidoglycan biosynthesis. Its function is as follows. Cell wall formation. This is UDP-N-acetylmuramate--L-alanine ligase from Phenylobacterium zucineum (strain HLK1).